Here is a 178-residue protein sequence, read N- to C-terminus: Large ribosomal subunit protein uL6 (178 aa).

Belongs to the universal ribosomal protein uL6 family. As to quaternary structure, part of the 50S ribosomal subunit.

Its function is as follows. This protein binds to the 23S rRNA, and is important in its secondary structure. It is located near the subunit interface in the base of the L7/L12 stalk, and near the tRNA binding site of the peptidyltransferase center. The protein is Large ribosomal subunit protein uL6 of Sulfurovum sp. (strain NBC37-1).